The chain runs to 417 residues: Echinulin prenyltransferase 1 (417 aa).

Dimethylallyl diphosphate is bound by residues arginine 90, lysine 179, tyrosine 181, lysine 248, tyrosine 250, tyrosine 333, tyrosine 398, and tyrosine 402.

This sequence belongs to the tryptophan dimethylallyltransferase family.

It carries out the reaction cyclo(L-tryptophyl-L-alanyl) + dimethylallyl diphosphate = preechinulin + diphosphate. It functions in the pathway secondary metabolite biosynthesis. The protein operates within alkaloid biosynthesis. Prenyltransferase; part of the gene cluster that mediates the biosynthesis of echinulin family alkaloid. The pathway begins with the biosynthesis of the cyclic dipeptide cyclo-L-Trp-L-Ala (cyclo-TA) by the NRPS echPS via condensation of L-alanine and L-tryptophan. The prenyltransferase echPT1 then catalyzes the first prenylation step, a reverse prenylation reaction at C2, to yield preechinulin. Preechinulin is the substrate of the cytochrome P450 monooxygenase echP450 that catalyzes the formation of the double bond between C10 and C11 to produce neoechulin A. The unique prenyltransferase echPT2 functions as a competitive enzyme with echP450 for preechinulin metabolization and uses preechinulin for effective regiospecific prenylations. Preechinulin is prenylated by echPT2 at C5 or C7. C7-prenylation leads to accumulation of tardioxopiperazine B without further modification by echPT2. In contrast, the C5-prenylated tardioxopiperazine A can be prenylated again by echPT2, predominantly at C7 to form echinulin or less frequently at C4 to give variecolorin L. EchPT2 also accepts neoechilunin A to produce varlecolorin G (prenylation at C5) or isoechinulin A (prenylation at C7). EchPT2 further converts isoechinulin A into dehydroechinulin. Moreover, a yet unidentified enzyme can also convert neoechilunin A into neoechilunin B by introducing a double bond between positions C14 and C17 and thus provides a further substrate to echPT2 for C5 and C7 prenylation. This chain is Echinulin prenyltransferase 1, found in Aspergillus ruber (Eurotium rubrum).